Consider the following 644-residue polypeptide: Sodium/hydrogen exchanger 9 (644 aa).

Residues 1-20 lie on the Lumenal side of the membrane; sequence MAGQLRLTSGKDEDHFQHQG. The chain crosses the membrane as a helical span at residues 21-41; the sequence is AVELLAFNFLLILTILTIWLF. The Cytoplasmic segment spans residues 42–45; the sequence is KNHR. A helical transmembrane segment spans residues 46 to 66; that stretch reads FRFLHETGGAMVYGLIMGLIL. The Lumenal portion of the chain corresponds to 67–126; that stretch reads RYATAPTDIDSGTVYNCGKLLFSPSTLLVNITDQVYEYKYQREINQHNISPHQGNAILEK. The chain crosses the membrane as a helical span at residues 127–147; the sequence is MTFDPEIFFNVLLPPIIFHAG. The Cytoplasmic portion of the chain corresponds to 148-164; the sequence is YSLKKRHFFQNLGSILT. The chain crosses the membrane as a helical span at residues 165–185; that stretch reads YAFLGTAISCVVIGLIMYGFV. Residues 186 to 203 are Lumenal-facing; sequence KAMVHAGQLKSGDFHFTD. Residues 204–224 form a helical membrane-spanning segment; sequence CLFFGSLMSATDPVTVLAIFH. At 225-235 the chain is on the cytoplasmic side; sequence ELHVDPDLYTL. A helical transmembrane segment spans residues 236–256; sequence LFGESVLNDAVAIVLTYSISI. Over 257 to 277 the chain is Lumenal; the sequence is YSPKENPNAFDTAAFFQSVGN. A helical membrane pass occupies residues 278 to 298; it reads FLGIFAGSFAMGSAYAVVTAL. The Cytoplasmic portion of the chain corresponds to 299-309; that stretch reads LTKFTKLREFP. The chain crosses the membrane as a helical span at residues 310-327; it reads MLETGLFFLLSWSAFLSA. Topologically, residues 328–333 are lumenal; sequence EAAGLT. Residues 334–350 form a helical membrane-spanning segment; sequence GIVAVLFCGVTQAHYTY. Topologically, residues 351-364 are cytoplasmic; the sequence is NNLSSDSKLRTKQL. Residues 365-385 form a helical membrane-spanning segment; it reads FEFMNFLAENVIFCYMGLALF. Residue T386 is a topological domain, lumenal. Residues 387-407 form a helical membrane-spanning segment; that stretch reads FQNHIFNALFILGAFLAIFVA. The Cytoplasmic portion of the chain corresponds to 408–429; the sequence is RACNIYPLSFLLNLGRKQKIPW. Residues 430–450 form a helical membrane-spanning segment; sequence NFQHMMMFSGLRGAIAFALAI. The Lumenal segment spans residues 451–465; that stretch reads RNTESQPKQMMFTTT. The helical transmembrane segment at 466–486 threads the bilayer; sequence LLLVFFTVWVFGGGTTPMLTW. The Cytoplasmic segment spans residues 487 to 644; sequence LQIRVGVDLD…EQTRGQPQMD (158 aa).

This sequence belongs to the monovalent cation:proton antiporter 1 (CPA1) transporter (TC 2.A.36) family. As to quaternary structure, homodimer; phosphatidylinositol-4,5-bisphosphate (PIP2) and phosphatidylinositol 3,4,5-trisphosphate (PIP3) could be involved in the dimer stabilization. Interacts (via the C-terminus) with RACK1. Interacts with CHP1. In terms of tissue distribution, expressed in hair bundles and in vestibular hair bundles. Expressed in brain.

It is found in the late endosome membrane. Its subcellular location is the early endosome membrane. It localises to the recycling endosome membrane. The protein localises to the cell membrane. The protein resides in the cytoplasmic vesicle. It is found in the phagosome membrane. The enzyme catalyses Na(+)(in) + H(+)(out) = Na(+)(out) + H(+)(in). It catalyses the reaction K(+)(in) + H(+)(out) = K(+)(out) + H(+)(in). Endosomal Na(+), K(+)/H(+) antiporter. Mediates the electroneutral exchange of endosomal luminal H(+) for a cytosolic Na(+) or K(+). By facilitating proton efflux, SLC9A9 counteracts the acidity generated by vacuolar (V)-ATPase, thereby limiting luminal acidification. Regulates organellar pH and consequently, endosome maturation and endocytic trafficking of plasma membrane receptors and neurotransporters. Promotes the recycling of transferrin receptors back to the cell surface to facilitate additional iron uptake in the brain. Regulates synaptic transmission by regulating the luminal pH of axonal endosomes. Regulates phagosome lumenal pH, thus affecting phagosome maturation, and consequently, microbicidal activity in macrophages. Can also be active at the cell surface of specialized cells, e.g., in the inner ear hair bundles uses the high K(+) of the endolymph to regulate intracelular pH. This Rattus norvegicus (Rat) protein is Sodium/hydrogen exchanger 9 (Slc9a9).